The primary structure comprises 146 residues: Large ribosomal subunit protein uL15 (146 aa).

The interval 1-51 (MQLNTLKPAEGSKKNRRRVGRGIGSGLGKTAGRGHKGQKSRSGGFHKVGFE) is disordered. The span at 21–31 (RGIGSGLGKTA) shows a compositional bias: gly residues.

Belongs to the universal ribosomal protein uL15 family. In terms of assembly, part of the 50S ribosomal subunit.

In terms of biological role, binds to the 23S rRNA. This chain is Large ribosomal subunit protein uL15, found in Polynucleobacter asymbioticus (strain DSM 18221 / CIP 109841 / QLW-P1DMWA-1) (Polynucleobacter necessarius subsp. asymbioticus).